Consider the following 572-residue polypeptide: Acyl-coenzyme A synthetase ACSM2, mitochondrial (572 aa).

A mitochondrion-targeting transit peptide spans 1–46; the sequence is MHWLWKIPRLCTFWGTEMFHRTFHMNIKKLMPIQWGHQEVPAKFNF. Residue Gln139 participates in CoA binding. ATP contacts are provided by residues 221 to 229, 359 to 364, Asp446, and Arg461; these read TSGTSGPPK and EIYGQT. A substrate-binding site is contributed by Thr364. CoA is bound at residue 469–471; the sequence is SGY. Substrate is bound at residue Arg472. Residues Arg501, Lys532, and 540-542 each bind CoA; that span reads YPR. Lys557 lines the ATP pocket.

This sequence belongs to the ATP-dependent AMP-binding enzyme family. As to quaternary structure, monomer. Mg(2+) is required as a cofactor. Mn(2+) serves as cofactor. As to expression, detected in kidney, in proximal tubules.

It localises to the mitochondrion. The enzyme catalyses a medium-chain fatty acid + ATP + CoA = a medium-chain fatty acyl-CoA + AMP + diphosphate. It carries out the reaction benzoate + ATP + CoA = benzoyl-CoA + AMP + diphosphate. The catalysed reaction is hexanoate + ATP + CoA = hexanoyl-CoA + AMP + diphosphate. It catalyses the reaction butanoate + ATP + CoA = butanoyl-CoA + AMP + diphosphate. The enzyme catalyses octanoate + ATP + CoA = octanoyl-CoA + AMP + diphosphate. It carries out the reaction decanoate + ATP + CoA = decanoyl-CoA + AMP + diphosphate. In terms of biological role, catalyzes the activation of fatty acids by CoA to produce an acyl-CoA, the first step in fatty acid metabolism. Capable of activating medium-chain fatty acids (e.g. butyric (C4) to decanoic (C10) acids), and certain carboxylate-containing xenobiotics, e.g. benzoate. The polypeptide is Acyl-coenzyme A synthetase ACSM2, mitochondrial (Acsm2) (Rattus norvegicus (Rat)).